The following is a 411-amino-acid chain: Protein Brevis radix-like 2 (411 aa).

2 disordered regions span residues 10–31 and 103–149; these read KDGG…KSLT and AAPS…DDDE. Polar residues predominate over residues 20 to 31; sequence ATATPNSGKSLT. Acidic residues predominate over residues 136 to 149; sequence GEEDYDDDDDDDDE. The region spanning 161-217 is the BRX 1 domain; it reads REWTAQVEPGVQITFVSIPGGAGNDLKRIRFSREMFNKWEAQRWWGENYDRVVELYN. 2 disordered regions span residues 245 to 294 and 324 to 346; these read SRVG…VAAA and AGPA…ASVS. Residues 276–294 show a composition bias toward low complexity; that stretch reads SRTASSKAQLSSSSSVAAA. Positions 356 to 411 constitute a BRX 2 domain; the sequence is TEWVEQDEPGVSITIREFGDGTRELRRVRFSRERFGEERAKVWWEQNRDRIHAQYL.

It belongs to the BRX family.

The protein resides in the nucleus. The protein is Protein Brevis radix-like 2 (BRXL2) of Oryza sativa subsp. japonica (Rice).